We begin with the raw amino-acid sequence, 126 residues long: Probable V-type proton ATPase subunit G (126 aa).

The protein belongs to the V-ATPase G subunit family. In terms of assembly, V-ATPase is a heteromultimeric enzyme made up of two complexes: the ATP-hydrolytic V1 complex and the proton translocation V0 complex. The V1 complex consists of three catalytic AB heterodimers that form a heterohexamer, three peripheral stalks each consisting of EG heterodimers, one central rotor including subunits D and F, and the regulatory subunits C and H. The proton translocation complex V0 consists of the proton transport subunit a, a ring of proteolipid subunits c9c'', rotary subunit d, subunits e and f, and the accessory subunits vah-19/Ac45 and vah-20/PRR. Interacts with ced-1.

Functionally, subunit of the V1 complex of vacuolar(H+)-ATPase (V-ATPase), a multisubunit enzyme composed of a peripheral complex (V1) that hydrolyzes ATP and a membrane integral complex (V0) that translocates protons. V-ATPase is responsible for acidifying and maintaining the pH of intracellular compartments and in some cell types, is targeted to the plasma membrane, where it is responsible for acidifying the extracellular environment. In neurons, required for necrotic cell death by promoting intracellular acidification. This Caenorhabditis elegans protein is Probable V-type proton ATPase subunit G.